The sequence spans 200 residues: Probable GTP-binding protein EngB (200 aa).

Residues 25–199 (SGYEVAFAGR…ISVLDRWYEW (175 aa)) enclose the EngB-type G domain. GTP-binding positions include 33–40 (GRSNAGKS), 60–64 (GRTQL), 78–81 (DLPG), 145–148 (TKAD), and 178–180 (FSS). Mg(2+) is bound by residues Ser40 and Thr62.

It belongs to the TRAFAC class TrmE-Era-EngA-EngB-Septin-like GTPase superfamily. EngB GTPase family. Mg(2+) is required as a cofactor.

In terms of biological role, necessary for normal cell division and for the maintenance of normal septation. The sequence is that of Probable GTP-binding protein EngB from Legionella pneumophila (strain Paris).